A 154-amino-acid polypeptide reads, in one-letter code: Small ribosomal subunit protein uS7c (154 aa).

Belongs to the universal ribosomal protein uS7 family. In terms of assembly, part of the 30S ribosomal subunit.

It is found in the plastid. The protein localises to the chloroplast. Functionally, one of the primary rRNA binding proteins, it binds directly to 16S rRNA where it nucleates assembly of the head domain of the 30S subunit. The protein is Small ribosomal subunit protein uS7c (rps7) of Pleurastrum terricola (Filamentous green alga).